We begin with the raw amino-acid sequence, 710 residues long: DNA ligase (710 aa).

Residues 53–57 (DAEYD), 102–103 (SL), and Glu-136 each bind NAD(+). The active-site N6-AMP-lysine intermediate is the Lys-138. Residues Arg-159, Glu-196, Lys-312, and Lys-336 each contribute to the NAD(+) site. Zn(2+) is bound by residues Cys-429, Cys-432, Cys-453, and Cys-459. Residues 633–710 (ETSSPVAGKT…DEDQWIELAG (78 aa)) enclose the BRCT domain.

It belongs to the NAD-dependent DNA ligase family. LigA subfamily. Mg(2+) serves as cofactor. It depends on Mn(2+) as a cofactor.

It carries out the reaction NAD(+) + (deoxyribonucleotide)n-3'-hydroxyl + 5'-phospho-(deoxyribonucleotide)m = (deoxyribonucleotide)n+m + AMP + beta-nicotinamide D-nucleotide.. DNA ligase that catalyzes the formation of phosphodiester linkages between 5'-phosphoryl and 3'-hydroxyl groups in double-stranded DNA using NAD as a coenzyme and as the energy source for the reaction. It is essential for DNA replication and repair of damaged DNA. The polypeptide is DNA ligase (Parvibaculum lavamentivorans (strain DS-1 / DSM 13023 / NCIMB 13966)).